The chain runs to 528 residues: Sodium-dependent lysophosphatidylcholine symporter 1 (528 aa).

The Cytoplasmic portion of the chain corresponds to 1–37 (MAGGGGAERVRVGAAAAGLLPPSCRQPRRRESRERLS). A helical transmembrane segment spans residues 38–66 (VCSKLCYAVGGAPYQTTGCALGFFLQIYL). At 67–73 (LDVAQLD) the chain is on the extracellular side. Residues 74-99 (PFYASIILFVGRAWDAITDPMVGFFI) form a helical membrane-spanning segment. Topologically, residues 100 to 109 (SKTPWTRFGR) are cytoplasmic. A helical transmembrane segment spans residues 110-129 (LMPWIIFSTPFAVISYFLIW). Topologically, residues 130–138 (FVPDISTGQ) are extracellular. Residues 139–161 (VMWYLIFYCIFQTLVTCFHVPYS) form a helical membrane-spanning segment. Residues 162 to 176 (ALTMFISREQSERDS) are Cytoplasmic-facing. A helical membrane pass occupies residues 177 to 199 (ATAYRMTVEVLGTVLGTAIQGQI). The Extracellular portion of the chain corresponds to 200–241 (VGKAVTPCIENPPFLSETNFSVAIRNVNMTHYTGSLADTRNA). Cys207 and Cys460 are oxidised to a cystine. N-linked (GlcNAc...) asparagine glycosylation is found at Asn218 and Asn227. A helical transmembrane segment spans residues 242-263 (YMVAAGVIGGLYILCAVILSVG). Residues 264 to 295 (VREKRESSELQSDEPVSFFRGLKLVMNHGAYI) are Cytoplasmic-facing. The helical transmembrane segment at 296–319 (KLITGFLFTSLAFMLLEGNFALFC) threads the bilayer. The Extracellular portion of the chain corresponds to 320 to 328 (TYTLGFRNE). A helical transmembrane segment spans residues 329-351 (FQNILLAIMLSATLTIPFWQWFL). Residues 352–355 (TRFG) are Cytoplasmic-facing. A helical transmembrane segment spans residues 356-376 (KKTAVYVGISSAVPFLITVVV). Residues 377-381 (LDSNL) are Extracellular-facing. The chain crosses the membrane as a helical span at residues 382 to 404 (VVTYIVAVAAGISVAAAFLLPWS). Residues 405–427 (MLPDVIDDFKLQHPESRGHEAIF) lie on the Cytoplasmic side of the membrane. The chain crosses the membrane as a helical span at residues 428–450 (FSFYVFFTKFTSGVSLGISTLSL). The Extracellular segment spans residues 451 to 467 (DFAGYQTRGCSQPSEVN). The helical transmembrane segment at 468 to 490 (ITLKLLVSAVPVGLILLGLLLFK) threads the bilayer. Over 491–528 (LYPIDEEKRRENKKALQDLREESNSSSESDSTELANIV) the chain is Cytoplasmic. Over residues 503 to 513 (KKALQDLREES) the composition is skewed to basic and acidic residues. The segment at 503 to 528 (KKALQDLREESNSSSESDSTELANIV) is disordered. The span at 514–528 (NSSSESDSTELANIV) shows a compositional bias: low complexity.

It belongs to the major facilitator superfamily.

The protein resides in the cell membrane. It is found in the endoplasmic reticulum membrane. It carries out the reaction a 1-acyl-sn-glycero-3-phosphocholine(in) + Na(+)(in) = a 1-acyl-sn-glycero-3-phosphocholine(out) + Na(+)(out). The catalysed reaction is 1-(4Z,7Z,10Z,13Z,16Z,19Z-docosahexaenoyl)-sn-glycero-3-phosphocholine(in) + Na(+)(in) = 1-(4Z,7Z,10Z,13Z,16Z,19Z-docosahexaenoyl)-sn-glycero-3-phosphocholine(out) + Na(+)(out). The enzyme catalyses 1-(9Z-octadecenoyl)-sn-glycero-3-phosphocholine(in) + Na(+)(in) = 1-(9Z-octadecenoyl)-sn-glycero-3-phosphocholine(out) + Na(+)(out). It catalyses the reaction 1-hexadecanoyl-sn-glycero-3-phosphocholine(in) + Na(+)(in) = 1-hexadecanoyl-sn-glycero-3-phosphocholine(out) + Na(+)(out). It carries out the reaction a 1-acyl-sn-glycero-3-phosphoethanolamine(in) + Na(+)(in) = a 1-acyl-sn-glycero-3-phosphoethanolamine(out) + Na(+)(out). In terms of biological role, sodium-dependent lysophosphatidylcholine (LPC) symporter, which plays an essential role for blood-brain barrier formation and function. Specifically expressed in endothelium of the blood-brain barrier of micro-vessels and transports LPC into the brain. Transport of LPC is essential because it constitutes the major mechanism by which docosahexaenoic acid (DHA), an omega-3 fatty acid that is essential for normal brain growth and cognitive function, enters the brain. Transports LPC carrying long-chain fatty acids such LPC oleate and LPC palmitate with a minimum acyl chain length of 14 carbons. Does not transport docosahexaenoic acid in unesterified fatty acid. The sequence is that of Sodium-dependent lysophosphatidylcholine symporter 1 from Gallus gallus (Chicken).